A 536-amino-acid chain; its full sequence is Prolyl 3-hydroxylase sudestada1 (536 aa).

The tract at residues 1-35 (METSSSSPVKPRRKDKDEDGRAEQEDSADQVGEPH) is disordered. Residues 14 to 24 (KDKDEDGRAEQ) show a composition bias toward basic and acidic residues. A Fe2OG dioxygenase domain is found at 165 to 275 (KLDYVSASCS…RLTINGWFHG (111 aa)). Residues histidine 185 and aspartate 187 each coordinate Fe cation. Tyrosine 199 serves as a coordination point for 2-oxoglutarate. Fe cation is bound at residue histidine 254. Residue arginine 266 coordinates 2-oxoglutarate. The interval 467–486 (PTAKAPTDGRRSDYDDEEED) is disordered.

The protein belongs to the TPA1 family. As to quaternary structure, monomer. Requires Fe(2+) as cofactor. The cofactor is L-ascorbate. In terms of tissue distribution, in third-instar larval tissues,highly expressed in the fat body, with significant expression in other organs including the brain, salivary glands, imaginal disks and gut.

Its subcellular location is the nucleus. It localises to the cytoplasm. It carries out the reaction [ribosomal protein uS12]-L-proline + 2-oxoglutarate + O2 = [ribosomal protein uS12]-(3S)-3-hydroxy-L-proline + succinate + CO2. In terms of biological role, prolyl 3-hydroxylase that catalyzes 3-hydroxylation of 'Pro-62' of small ribosomal subunit uS12 (RpS23), thereby regulating protein translation termination efficiency. This Drosophila melanogaster (Fruit fly) protein is Prolyl 3-hydroxylase sudestada1 (sud1).